Here is an 833-residue protein sequence, read N- to C-terminus: Leucine--tRNA ligase (833 aa).

The short motif at 41–52 (PYPSGAGLHVGH) is the 'HIGH' region element. Residues 610–614 (KMSKS) carry the 'KMSKS' region motif. Lysine 613 contributes to the ATP binding site.

The protein belongs to the class-I aminoacyl-tRNA synthetase family.

The protein localises to the cytoplasm. It carries out the reaction tRNA(Leu) + L-leucine + ATP = L-leucyl-tRNA(Leu) + AMP + diphosphate. The polypeptide is Leucine--tRNA ligase (Streptococcus equi subsp. zooepidemicus (strain H70)).